Consider the following 396-residue polypeptide: Proteinase-activated receptor 4 (396 aa).

An N-terminal signal peptide occupies residues 1 to 16 (MCWPLLYPLVLGLSIS). Residues 17–59 (LAEGIQTPSIYDDVESTRGSHEGPLGPTVELKEPKSSDKPNPR) constitute a propeptide, removed for receptor activation. Residues 28-62 (DDVESTRGSHEGPLGPTVELKEPKSSDKPNPRGYP) are disordered. Positions 46 to 57 (ELKEPKSSDKPN) are enriched in basic and acidic residues. At 60–94 (GYPGKFCANDSDTLELPASSQALLLGWVPTRLVPA) the chain is on the extracellular side. N-linked (GlcNAc...) asparagine glycosylation occurs at N68. A helical membrane pass occupies residues 95 to 115 (LYGLVVAVGLPANGLALWVLA). The Cytoplasmic portion of the chain corresponds to 116 to 120 (TRVPR). A helical transmembrane segment spans residues 121-141 (LPSTILLMNLAVADLLLALVL). Topologically, residues 142–162 (PPRLAYHLRGQRWPFGEAACR) are extracellular. A disulfide bridge links C161 with C240. Residues 163-183 (VATAALYGHMYGSVLLLAAVS) form a helical membrane-spanning segment. At 184 to 203 (LDRYLALVHPLRARALRGQR) the chain is on the cytoplasmic side. Residues 204–224 (LTTGLCLVAWLSAATLALPLT) traverse the membrane as a helical segment. The Extracellular portion of the chain corresponds to 225–255 (LHRQTFRLAGSDRMLCHDALPLTEQTSHWRP). Residues 256 to 276 (AFICLAVLGCFVPLLAMGLCY) form a helical membrane-spanning segment. The Cytoplasmic portion of the chain corresponds to 277–295 (GATLRALAANGQRYSHALR). Residues 296–316 (LTALVLFSAVASFTPSNVLLV) traverse the membrane as a helical segment. Residues 317–331 (LHYSNPSPEAWGNLY) are Extracellular-facing. Residues 332 to 355 (GAYVPSLALSTLNSCVDPFIYYYV) form a helical membrane-spanning segment. The Cytoplasmic segment spans residues 356–396 (SHEFREKVRAMLCRQPEASSSSQASREAGSRGTAICSSTLL).

The protein belongs to the G-protein coupled receptor 1 family. In terms of processing, a proteolytic cleavage generates a new N-terminus that functions as a tethered ligand. Highly expressed in the spleen. Slight expression in the heart, lung, skeletal muscle and kidney. No detectable expression in brain, liver or testis. Also detected in platelets.

The protein resides in the cell membrane. Its function is as follows. Receptor for activated thrombin or trypsin coupled to G proteins that stimulate phosphoinositide hydrolysis. May play a role in platelets activation. The sequence is that of Proteinase-activated receptor 4 (F2rl3) from Mus musculus (Mouse).